The following is a 491-amino-acid chain: Ran-binding protein 3-like (491 aa).

The region spanning 270–441 (TFKSVLKFPN…VALRSLAKQG (172 aa)) is the RanBD1 domain. A disordered region spans residues 440 to 468 (QGDGGPAESQSDTALPQLNGESCDEDEDE). Residues 447–459 (ESQSDTALPQLNG) show a composition bias toward polar residues.

In terms of assembly, interacts with SMAD1, SMAD5 and SMAD8.

It is found in the nucleus. The protein resides in the cytoplasm. Its function is as follows. Nuclear export factor for BMP-specific SMAD1/5/8 that plays a critical role in terminating BMP signaling and regulating mesenchymal stem cell differentiation by blocking osteoblast differentiation to promote myogenic differention. Directly recognizes dephosphorylated SMAD1/5/8 and mediates their nuclear export in a Ran-dependent manner. The polypeptide is Ran-binding protein 3-like (Ranbp3l) (Mus musculus (Mouse)).